Reading from the N-terminus, the 316-residue chain is F-box protein At4g09920 (316 aa).

The 47-residue stretch at 1–47 (MDRIIGLPDEVLVKILSFVPTKVAVSTSILSKRWEFLWMWLTKLKFG) folds into the F-box domain.

The chain is F-box protein At4g09920 from Arabidopsis thaliana (Mouse-ear cress).